The following is a 232-amino-acid chain: Zinc-finger homeodomain protein 5 (232 aa).

A compositionally biased stretch (acidic residues) spans 1–11 (MELSEHEEDAG). The interval 1–25 (MELSEHEEDAGDVGGGCSSPPTPPH) is disordered. The segment at 40 to 86 (YHECLRNHAAASGGHVVDGCGEFMPASTEEPLACAACGCHRSFHRRD) adopts a ZF-HD dimerization-type; degenerate zinc-finger fold. Residues 126 to 170 (GLPFPGYGTPSGGTGTTTASSSDERLRPSPVQPRRRSRTTFTREQ) are disordered. A DNA-binding region (homeobox) is located at residues 159 to 222 (RRRSRTTFTR…NNKHSFKQKQ (64 aa)).

In terms of assembly, homo- and heterodimer with other ZFHD proteins.

It is found in the nucleus. Functionally, putative transcription factor. The protein is Zinc-finger homeodomain protein 5 (ZHD5) of Oryza sativa subsp. indica (Rice).